We begin with the raw amino-acid sequence, 348 residues long: Chlorophyll(ide) b reductase NOL, chloroplastic (348 aa).

A chloroplast-targeting transit peptide spans 1–61 (MATWSGFNVS…TRQNLTVTPS (61 aa)). 84–108 (ITGSTKGIGYALAREFLKAGDNVVI) lines the NAD(+) pocket. Tyrosine 233 serves as the catalytic Proton acceptor.

This sequence belongs to the short-chain dehydrogenases/reductases (SDR) family. In terms of assembly, interacts with NCY1 to form a complex that acts as a chlorophyll b reductase. Interacts with HCAR, RCCR and the LHCII complex. Part of a SGR1-CCE-LHCII complex, which acts in chlorophyll breakdown.

Its subcellular location is the plastid. The protein localises to the chloroplast thylakoid membrane. The enzyme catalyses 7(1)-hydroxychlorophyllide a + NAD(+) = chlorophyllide b + NADH + H(+). It carries out the reaction 7(1)-hydroxychlorophyllide a + NADP(+) = chlorophyllide b + NADPH + H(+). Its function is as follows. Required for chlorophyll b degradation. Chlorophyll b, chlorophyllide b, pheophorbide b and pheophytin b can be used as substrates. Belongs to the chlorophyll catabolic enzymes (CCEs). In Arabidopsis thaliana (Mouse-ear cress), this protein is Chlorophyll(ide) b reductase NOL, chloroplastic (NOL).